The following is a 112-amino-acid chain: Protein 4.2 (112 aa).

The interval 64–93 (KPDGLNHQVTQGKKSHTQSQQTGPTTLTSD) is disordered. The segment covering 70-92 (HQVTQGKKSHTQSQQTGPTTLTS) has biased composition (polar residues).

The chain is Protein 4.2 from Escherichia phage T7 (Bacteriophage T7).